Here is a 262-residue protein sequence, read N- to C-terminus: PsbP domain-containing protein 6, chloroplastic (262 aa).

The cysteines at positions 128 and 132 are disulfide-linked.

Belongs to the PsbP family.

Its subcellular location is the plastid. The protein localises to the chloroplast thylakoid lumen. Its function is as follows. May be involved in the redox regulation of photosystem II. The protein is PsbP domain-containing protein 6, chloroplastic (PPD6) of Arabidopsis thaliana (Mouse-ear cress).